Reading from the N-terminus, the 550-residue chain is Carboxypeptidase Y homolog A (550 aa).

An N-terminal signal peptide occupies residues 1–18 (MKSLVLGLLVGSAIASGP). A propeptide spanning residues 19–131 (LQHVLHAPPD…KLAQYDLRIK (113 aa)) is cleaved from the precursor. The segment at 20-39 (QHVLHAPPDPEPKPEPEPQV) is disordered. Cystine bridges form between Cys-185–Cys-424, Cys-319–Cys-333, Cys-343–Cys-366, Cys-350–Cys-359, and Cys-388–Cys-394. N-linked (GlcNAc...) asparagine glycosylation is found at Asn-203 and Asn-216. Residue Ser-272 is part of the active site. Asn-289 carries N-linked (GlcNAc...) asparagine glycosylation. Asn-387 is a glycosylation site (N-linked (GlcNAc...) asparagine). Asp-463 is a catalytic residue. N-linked (GlcNAc...) asparagine glycans are attached at residues Asn-493 and Asn-514. Residue His-525 is part of the active site.

It belongs to the peptidase S10 family.

It localises to the vacuole. It catalyses the reaction Release of a C-terminal amino acid with broad specificity.. In terms of biological role, vacuolar carboxypeptidase involved in degradation of small peptides. Digests preferentially peptides containing an aliphatic or hydrophobic residue in P1' position, as well as methionine, leucine or phenylalanine in P1 position of ester substrate. This is Carboxypeptidase Y homolog A (CPYA) from Paracoccidioides brasiliensis (strain Pb03).